Consider the following 117-residue polypeptide: Modulator protein MzrA (117 aa).

At 1–11 the chain is on the cytoplasmic side; sequence MMTNRRFRKPS. The helical transmembrane segment at 12–29 threads the bilayer; the sequence is AWRLLLLLLPLVVLLSMS. Over 30 to 117 the chain is Periplasmic; sequence SRRLPDEVML…SNGTSPVTRS (88 aa).

The protein belongs to the MzrA family. In terms of assembly, interacts with EnvZ.

The protein localises to the cell inner membrane. Its function is as follows. Modulates the activity of the EnvZ/OmpR two-component regulatory system, probably by directly modulating EnvZ enzymatic activity and increasing stability of phosphorylated OmpR. In Dickeya dadantii (strain 3937) (Erwinia chrysanthemi (strain 3937)), this protein is Modulator protein MzrA.